Here is a 64-residue protein sequence, read N- to C-terminus: Large ribosomal subunit protein bL35 (64 aa).

Over residues 1–45 the composition is skewed to basic residues; the sequence is MPKMKTHKGAAKRFKKTGKGKIKRRKAFKSHILTKKTPKRKRNLR. The segment at 1–64 is disordered; that stretch reads MPKMKTHKGA…EEKRIKRLLP (64 aa).

It belongs to the bacterial ribosomal protein bL35 family.

The chain is Large ribosomal subunit protein bL35 from Natranaerobius thermophilus (strain ATCC BAA-1301 / DSM 18059 / JW/NM-WN-LF).